Consider the following 261-residue polypeptide: Imidazole glycerol phosphate synthase subunit HisF (261 aa).

Catalysis depends on residues Asp11 and Asp130.

Belongs to the HisA/HisF family. Heterodimer of HisH and HisF.

It is found in the cytoplasm. It carries out the reaction 5-[(5-phospho-1-deoxy-D-ribulos-1-ylimino)methylamino]-1-(5-phospho-beta-D-ribosyl)imidazole-4-carboxamide + L-glutamine = D-erythro-1-(imidazol-4-yl)glycerol 3-phosphate + 5-amino-1-(5-phospho-beta-D-ribosyl)imidazole-4-carboxamide + L-glutamate + H(+). It functions in the pathway amino-acid biosynthesis; L-histidine biosynthesis; L-histidine from 5-phospho-alpha-D-ribose 1-diphosphate: step 5/9. Functionally, IGPS catalyzes the conversion of PRFAR and glutamine to IGP, AICAR and glutamate. The HisF subunit catalyzes the cyclization activity that produces IGP and AICAR from PRFAR using the ammonia provided by the HisH subunit. The chain is Imidazole glycerol phosphate synthase subunit HisF from Heliobacterium mobile (Heliobacillus mobilis).